The chain runs to 113 residues: Mediator of RNA polymerase II transcription subunit 22 (113 aa).

It belongs to the Mediator complex subunit 22 family. As to quaternary structure, component of the Mediator complex.

The protein resides in the nucleus. In terms of biological role, component of the Mediator complex, a coactivator involved in the regulated transcription of nearly all RNA polymerase II-dependent genes. Mediator functions as a bridge to convey information from gene-specific regulatory proteins to the basal RNA polymerase II transcription machinery. Mediator is recruited to promoters by direct interactions with regulatory proteins and serves as a scaffold for the assembly of a functional preinitiation complex with RNA polymerase II and the general transcription factors. The protein is Mediator of RNA polymerase II transcription subunit 22 (SRB6) of Candida glabrata (strain ATCC 2001 / BCRC 20586 / JCM 3761 / NBRC 0622 / NRRL Y-65 / CBS 138) (Yeast).